The following is a 237-amino-acid chain: 7-cyano-7-deazaguanine synthase (237 aa).

9–19 (YSGGLDSTTCL) contributes to the ATP binding site. Zn(2+) contacts are provided by Cys189, Cys199, Cys202, and Cys205.

This sequence belongs to the QueC family. The cofactor is Zn(2+).

The catalysed reaction is 7-carboxy-7-deazaguanine + NH4(+) + ATP = 7-cyano-7-deazaguanine + ADP + phosphate + H2O + H(+). It functions in the pathway purine metabolism; 7-cyano-7-deazaguanine biosynthesis. In terms of biological role, catalyzes the ATP-dependent conversion of 7-carboxy-7-deazaguanine (CDG) to 7-cyano-7-deazaguanine (preQ(0)). The sequence is that of 7-cyano-7-deazaguanine synthase from Geobacter metallireducens (strain ATCC 53774 / DSM 7210 / GS-15).